We begin with the raw amino-acid sequence, 181 residues long: Ribulose bisphosphate carboxylase small subunit, chloroplastic 1 (181 aa).

A chloroplast-targeting transit peptide spans 1-57 (MASSIVSSAAAATRSNVAQASMVAPFTGLKSAASFPVTKKNNNVDITSLASNGGRVR).

This sequence belongs to the RuBisCO small chain family. (Microbial infection) Binds to tobamovirus movement protein; this interaction seems required for viral systemic movement. In terms of assembly, heterohexadecamer of 8 large and 8 small subunits.

The protein resides in the plastid. The protein localises to the chloroplast. It localises to the cell junction. It is found in the plasmodesma. In terms of biological role, ruBisCO catalyzes two reactions: the carboxylation of D-ribulose 1,5-bisphosphate, the primary event in carbon dioxide fixation, as well as the oxidative fragmentation of the pentose substrate. Both reactions occur simultaneously and in competition at the same active site. Although the small subunit is not catalytic it is essential for maximal activity. Involved in antiviral defenses. The sequence is that of Ribulose bisphosphate carboxylase small subunit, chloroplastic 1 from Solanum lycopersicum (Tomato).